The chain runs to 128 residues: Small ribosomal subunit protein uS9 (128 aa).

Positions 106 to 128 are disordered; sequence PRVVERKKPGRPKARKRFQFSKR. Residues 113–128 show a composition bias toward basic residues; it reads KPGRPKARKRFQFSKR.

Belongs to the universal ribosomal protein uS9 family.

The chain is Small ribosomal subunit protein uS9 from Porphyromonas gingivalis (strain ATCC 33277 / DSM 20709 / CIP 103683 / JCM 12257 / NCTC 11834 / 2561).